We begin with the raw amino-acid sequence, 312 residues long: Small ribosomal subunit protein uS2 (312 aa).

The segment at 232–312 is disordered; that stretch reads RASGAAERDE…AAPEGEAAAE (81 aa). Over residues 245–284 the composition is skewed to basic and acidic residues; that stretch reads REGRDDRGDRRDDRRGPRRGDRRDDRRDRGGDRGGDRRGP. Low complexity predominate over residues 291–312; it reads AAPVASAEPAAEAAPEGEAAAE.

This sequence belongs to the universal ribosomal protein uS2 family.

The sequence is that of Small ribosomal subunit protein uS2 from Myxococcus xanthus (strain DK1622).